A 197-amino-acid chain; its full sequence is Protein LURP-one-related 9 (197 aa).

The protein belongs to the LOR family.

Functionally, might be related to the phospholipid scramblase and tubby-like superfamily of membrane tethered transcription factors. This chain is Protein LURP-one-related 9, found in Arabidopsis thaliana (Mouse-ear cress).